Consider the following 139-residue polypeptide: Putative pre-16S rRNA nuclease (139 aa).

Belongs to the YqgF nuclease family.

It is found in the cytoplasm. Functionally, could be a nuclease involved in processing of the 5'-end of pre-16S rRNA. In Legionella pneumophila subsp. pneumophila (strain Philadelphia 1 / ATCC 33152 / DSM 7513), this protein is Putative pre-16S rRNA nuclease.